A 414-amino-acid chain; its full sequence is Nucleoredoxin (414 aa).

A Thioredoxin domain is found at 131–305 (LLVKDDPEGL…ELNAVQLNEG (175 aa)).

The protein belongs to the nucleoredoxin family.

The protein resides in the cytoplasm. Its subcellular location is the cytosol. The protein localises to the nucleus. It carries out the reaction [protein]-dithiol + NAD(+) = [protein]-disulfide + NADH + H(+). It catalyses the reaction [protein]-dithiol + NADP(+) = [protein]-disulfide + NADPH + H(+). Functionally, functions as a redox-dependent negative regulator of the Wnt signaling pathway. This Xenopus laevis (African clawed frog) protein is Nucleoredoxin (nxn).